We begin with the raw amino-acid sequence, 403 residues long: MARTAGLREPAAPLEKTPLETYVPPAKPSLIGLSRAELAARLGDVGVPERQQKMRVQQLWHWIYFRGARSFDEMSSVSKDTRTALAERFTVDRPEVVAEQISNDGTRKWLLRLPSGDDLQKAHEVECVYIPETDRGTLCVSSQVGCTLNCAFCHTGTQRLVRNLTAGEIVGQVMVARDRLNDWADRETPHGNRLITNIVMMGMGEPLYNFDAVRDALLIVSDNEGIGISRRRITLSTSGVVPNIKRAGEEIGVMLAISLHAVRDELRDELVPLNRKYPIAELLQACRDYPGASNARRITFEYVMLKGVNDSLDDARLLVKLLKGIPAKINLIPFNPWPGSAYECSDWEQIEKFSEYVFNAGYSSPVRTPRGRDILAACGQLKSETEKLSARERQALRAMAMTD.

Glutamate 126 serves as the catalytic Proton acceptor. The Radical SAM core domain maps to 132-375 (ETDRGTLCVS…VRTPRGRDIL (244 aa)). A disulfide bond links cysteine 139 and cysteine 378. [4Fe-4S] cluster contacts are provided by cysteine 146, cysteine 150, and cysteine 153. S-adenosyl-L-methionine is bound by residues 204-205 (GE), serine 236, 258-260 (SLH), and asparagine 335. Residue cysteine 378 is the S-methylcysteine intermediate of the active site.

This sequence belongs to the radical SAM superfamily. RlmN family. The cofactor is [4Fe-4S] cluster.

Its subcellular location is the cytoplasm. It catalyses the reaction adenosine(2503) in 23S rRNA + 2 reduced [2Fe-2S]-[ferredoxin] + 2 S-adenosyl-L-methionine = 2-methyladenosine(2503) in 23S rRNA + 5'-deoxyadenosine + L-methionine + 2 oxidized [2Fe-2S]-[ferredoxin] + S-adenosyl-L-homocysteine. It carries out the reaction adenosine(37) in tRNA + 2 reduced [2Fe-2S]-[ferredoxin] + 2 S-adenosyl-L-methionine = 2-methyladenosine(37) in tRNA + 5'-deoxyadenosine + L-methionine + 2 oxidized [2Fe-2S]-[ferredoxin] + S-adenosyl-L-homocysteine. Specifically methylates position 2 of adenine 2503 in 23S rRNA and position 2 of adenine 37 in tRNAs. m2A2503 modification seems to play a crucial role in the proofreading step occurring at the peptidyl transferase center and thus would serve to optimize ribosomal fidelity. The sequence is that of Dual-specificity RNA methyltransferase RlmN from Bradyrhizobium sp. (strain BTAi1 / ATCC BAA-1182).